Reading from the N-terminus, the 519-residue chain is Cysteine--tRNA ligase (519 aa).

Cysteine 30 contacts Zn(2+). The 'HIGH' region motif lies at proline 32–asparagine 42. Zn(2+)-binding residues include cysteine 221, histidine 253, and glutamate 257. The 'KMSKS' region motif lies at lysine 286–serine 290. Lysine 289 contributes to the ATP binding site.

The protein belongs to the class-I aminoacyl-tRNA synthetase family. In terms of assembly, monomer. Requires Zn(2+) as cofactor.

The protein localises to the cytoplasm. It carries out the reaction tRNA(Cys) + L-cysteine + ATP = L-cysteinyl-tRNA(Cys) + AMP + diphosphate. This chain is Cysteine--tRNA ligase, found in Cereibacter sphaeroides (strain KD131 / KCTC 12085) (Rhodobacter sphaeroides).